Consider the following 360-residue polypeptide: GTPase Obg (360 aa).

An Obg domain is found at Met-1–Ile-156. In terms of domain architecture, OBG-type G spans Ala-157 to Pro-360. GTP contacts are provided by residues Gly-163 to Ser-170, Phe-188 to Val-192, Asp-210 to Gly-213, Asn-279 to Asp-282, and Ser-341 to Val-343. Positions 170 and 190 each coordinate Mg(2+).

It belongs to the TRAFAC class OBG-HflX-like GTPase superfamily. OBG GTPase family. As to quaternary structure, monomer. Mg(2+) is required as a cofactor.

The protein localises to the cytoplasm. Its function is as follows. An essential GTPase which binds GTP, GDP and possibly (p)ppGpp with moderate affinity, with high nucleotide exchange rates and a fairly low GTP hydrolysis rate. Plays a role in control of the cell cycle, stress response, ribosome biogenesis and in those bacteria that undergo differentiation, in morphogenesis control. This chain is GTPase Obg, found in Helicobacter pylori (strain HPAG1).